The sequence spans 65 residues: Large ribosomal subunit protein uL29 (65 aa).

Belongs to the universal ribosomal protein uL29 family.

The sequence is that of Large ribosomal subunit protein uL29 from Buchnera aphidicola subsp. Cinara cedri (strain Cc).